A 598-amino-acid polypeptide reads, in one-letter code: Acetylcholine receptor subunit alpha-type acr-5 (598 aa).

Positions 1 to 16 (MLPNIILILLIRYCSC) are cleaved as a signal peptide. Topologically, residues 17–323 (GAGSRVYEKY…HLVIRRKPLY (307 aa)) are extracellular. N-linked (GlcNAc...) asparagine glycans are attached at residues Asn54, Asn71, Asn77, Asn134, Asn178, and Asn252. Residues 324–344 (YMINLVVPTSIITIVAVTGFF) form a helical membrane-spanning segment. The Cytoplasmic portion of the chain corresponds to 345 to 356 (TPTSSSSERDEK). Residues 357-377 (LYLGINTLLTMSVMMLMVCNQ) traverse the membrane as a helical segment. Topologically, residues 378 to 391 (MPSTSTYVPLMSWY) are extracellular. The chain crosses the membrane as a helical span at residues 392 to 412 (YIGIIMVIVVGTFLATGVLAI). Topologically, residues 413–563 (HGQKHYNKPI…WEFLANVLDR (151 aa)) are cytoplasmic. The helical transmembrane segment at 564–584 (ILLTIFCGFTFAVFIILIGFD) threads the bilayer. Topologically, residues 585 to 598 (SFFTFHTDSPPKTM) are extracellular.

This sequence belongs to the ligand-gated ion channel (TC 1.A.9) family. Acetylcholine receptor (TC 1.A.9.1) subfamily.

The protein localises to the postsynaptic cell membrane. It localises to the cell membrane. Subunit of nicotinic acetylcholine receptor (nAChR). Involved in nAChR sensitivity to nicotine. Modulates locomotion towards the drug nicotine. The sequence is that of Acetylcholine receptor subunit alpha-type acr-5 from Caenorhabditis elegans.